A 274-amino-acid polypeptide reads, in one-letter code: ATP synthase subunit b 2 (274 aa).

A helical transmembrane segment spans residues 2–22 (HIDWFVLLAQLVNFLILIYLL).

This sequence belongs to the ATPase B chain family. F-type ATPases have 2 components, F(1) - the catalytic core - and F(0) - the membrane proton channel. F(1) has five subunits: alpha(3), beta(3), gamma(1), delta(1), epsilon(1). F(0) has three main subunits: a(1), b(2) and c(10-14). The alpha and beta chains form an alternating ring which encloses part of the gamma chain. F(1) is attached to F(0) by a central stalk formed by the gamma and epsilon chains, while a peripheral stalk is formed by the delta and b chains.

Its subcellular location is the cell inner membrane. F(1)F(0) ATP synthase produces ATP from ADP in the presence of a proton or sodium gradient. F-type ATPases consist of two structural domains, F(1) containing the extramembraneous catalytic core and F(0) containing the membrane proton channel, linked together by a central stalk and a peripheral stalk. During catalysis, ATP synthesis in the catalytic domain of F(1) is coupled via a rotary mechanism of the central stalk subunits to proton translocation. In terms of biological role, component of the F(0) channel, it forms part of the peripheral stalk, linking F(1) to F(0). This Syntrophus aciditrophicus (strain SB) protein is ATP synthase subunit b 2.